Here is a 1059-residue protein sequence, read N- to C-terminus: Zinc finger protein 865 (1059 aa).

Disordered regions lie at residues 1–24, 58–142, and 161–206; these read MEAN…EDGV, LPCA…DAAF, and NLKR…CDPT. The span at 8 to 21 shows a compositional bias: gly residues; the sequence is SGAGGGGSSGIGGE. Over residues 61-78 the composition is skewed to pro residues; the sequence is APGPPPQPPPQPPPPQYD. The segment covering 93 to 119 has biased composition (low complexity); sequence SSSSSSSSSSSSSSSSSSSSSSSSSQA. Composition is skewed to pro residues over residues 124 to 137 and 183 to 198; these read PPLP…PPPL and APGP…PGPP. 2 C2H2-type zinc fingers span residues 224–246 and 252–274; these read FPCG…MLVH and YECG…RRCH. Residues 275-342 are disordered; the sequence is KDVPPAAGGP…PAGVGVPPPA (68 aa). Residues 281-296 are compositionally biased toward pro residues; the sequence is AGGPPQPGPHLPPLGL. Low complexity-rich tracts occupy residues 297 to 316 and 324 to 337; these read PAPA…SSGP and APSA…AGVG. 4 C2H2-type zinc fingers span residues 350-372, 378-400, 407-429, and 441-463; these read FACP…QIIH, FSCS…VKTH, LPCG…QAAH, and YPCD…KAAH. The interval 461–503 is disordered; it reads AAHAPPAAAAEAPKDGAASAPQPPPTFPPGPYLLPPDPPTTDS. Residues 463-480 show a composition bias toward low complexity; the sequence is HAPPAAAAEAPKDGAASA. The span at 481–499 shows a compositional bias: pro residues; that stretch reads PQPPPTFPPGPYLLPPDPP. 5 C2H2-type zinc fingers span residues 550-572, 578-600, 606-628, 669-691, and 697-719; these read FCCG…ERIH, HQCP…HVVH, YKCE…RQVH, YACS…KEVH, and YGCD…KLVH. A disordered region spans residues 726–747; that stretch reads LLPPAPGGLQPPDGSSGTDAAS. C2H2-type zinc fingers lie at residues 792–814, 820–842, 848–870, 876–898, 904–926, 932–954, 960–982, 989–1011, and 1017–1039; these read FSCA…KYVH, LGCG…RRSH, FRCP…QRCH, YRCG…RVVH, FKCG…RRLH, QRCS…QRLH, YRCE…QRAH, LRCP…LAAH, and FRCS…RLAH. Lys802 participates in a covalent cross-link: Glycyl lysine isopeptide (Lys-Gly) (interchain with G-Cter in SUMO2). Residue Lys1040 forms a Glycyl lysine isopeptide (Lys-Gly) (interchain with G-Cter in SUMO2) linkage.

The protein belongs to the krueppel C2H2-type zinc-finger protein family.

Its subcellular location is the nucleus. May be involved in transcriptional regulation. This Homo sapiens (Human) protein is Zinc finger protein 865 (ZNF865).